Reading from the N-terminus, the 258-residue chain is Aspartate/glutamate leucyltransferase (258 aa).

This sequence belongs to the R-transferase family. Bpt subfamily.

It localises to the cytoplasm. The enzyme catalyses N-terminal L-glutamyl-[protein] + L-leucyl-tRNA(Leu) = N-terminal L-leucyl-L-glutamyl-[protein] + tRNA(Leu) + H(+). It carries out the reaction N-terminal L-aspartyl-[protein] + L-leucyl-tRNA(Leu) = N-terminal L-leucyl-L-aspartyl-[protein] + tRNA(Leu) + H(+). Its function is as follows. Functions in the N-end rule pathway of protein degradation where it conjugates Leu from its aminoacyl-tRNA to the N-termini of proteins containing an N-terminal aspartate or glutamate. The chain is Aspartate/glutamate leucyltransferase from Rhodopseudomonas palustris (strain ATCC BAA-98 / CGA009).